A 312-amino-acid polypeptide reads, in one-letter code: tRNA pseudouridine synthase B (312 aa).

D37 acts as the Nucleophile in catalysis.

The protein belongs to the pseudouridine synthase TruB family. Type 1 subfamily.

The catalysed reaction is uridine(55) in tRNA = pseudouridine(55) in tRNA. In terms of biological role, responsible for synthesis of pseudouridine from uracil-55 in the psi GC loop of transfer RNAs. The sequence is that of tRNA pseudouridine synthase B from Deinococcus geothermalis (strain DSM 11300 / CIP 105573 / AG-3a).